The following is a 560-amino-acid chain: DNA-directed primase/polymerase protein (560 aa).

Positions M1–K22 form a coiled coil. Substrate is bound by residues R76, D114–E116, and K165–H169. Residues D114 and E116 each contribute to the Mn(2+) site. The segment at E203 to P223 is disordered. S255 bears the Phosphoserine mark. Substrate-binding positions include R288 to R291 and K297. C419, H426, C446, and C451 together coordinate Zn(2+). The Zinc knuckle motif motif lies at C419 to K452. The disordered stretch occupies residues T480 to A507. An interaction with RPA1 region spans residues T481–E560. The segment covering N490–A507 has biased composition (polar residues). 2 consecutive short sequence motifs (RPA1-binding motif) follow at residues W513 to E527 and E548 to E556.

It belongs to the eukaryotic-type primase small subunit family. Interacts with RPA1; leading to recruitment to chromatin and stimulate DNA primase activity. Interacts with SSBP1. Interacts with POLDIP2; leading to enhance DNA polymerase activity. It depends on Mn(2+) as a cofactor.

The protein localises to the nucleus. The protein resides in the mitochondrion matrix. It localises to the chromosome. It carries out the reaction ssDNA + n NTP = ssDNA/pppN(pN)n-1 hybrid + (n-1) diphosphate.. The enzyme catalyses DNA(n) + a 2'-deoxyribonucleoside 5'-triphosphate = DNA(n+1) + diphosphate. Its function is as follows. DNA primase and DNA polymerase required to tolerate replication-stalling lesions by bypassing them. Required to facilitate mitochondrial and nuclear replication fork progression by initiating de novo DNA synthesis using dNTPs and acting as an error-prone DNA polymerase able to bypass certain DNA lesions. Shows a high capacity to tolerate DNA damage lesions such as 8oxoG and abasic sites in DNA. Provides different translesion synthesis alternatives when DNA replication is stalled: able to synthesize DNA primers downstream of lesions, such as ultraviolet (UV) lesions, R-loops and G-quadruplexes, to allow DNA replication to continue. Can also realign primers ahead of 'unreadable lesions' such as abasic sites and 6-4 photoproduct (6-4 pyrimidine-pyrimidinone), thereby skipping the lesion. Repriming avoids fork degradation while leading to accumulation of internal ssDNA gaps behind the forks. Also able to incorporate nucleotides opposite DNA lesions such as 8oxoG, like a regular translesion synthesis DNA polymerase. Also required for reinitiating stalled forks after UV damage during nuclear DNA replication. Required for mitochondrial DNA (mtDNA) synthesis and replication, by reinitiating synthesis after UV damage or in the presence of chain-terminating nucleotides. Prevents APOBEC family-mediated DNA mutagenesis by repriming downstream of abasic site to prohibit error-prone translesion synthesis. Has non-overlapping function with POLH. In addition to its role in DNA damage response, also required to maintain efficient nuclear and mitochondrial DNA replication in unperturbed cells. The polypeptide is DNA-directed primase/polymerase protein (Homo sapiens (Human)).